We begin with the raw amino-acid sequence, 161 residues long: Negative cofactor 2 complex subunit beta (161 aa).

Residues 11–75 enclose the Histone-fold domain; the sequence is SLPKATVQKM…IAAEHIIKAL (65 aa). The segment covering 93 to 107 has biased composition (basic and acidic residues); sequence EHKEQQKNREKKSSK. Disordered regions lie at residues 93 to 116 and 130 to 161; these read EHKE…VSRD and RERF…TKEN. Over residues 135 to 147 the composition is skewed to polar residues; sequence NQNIAHDNHTTTA.

The protein belongs to the NC2 beta/DR1 family.

It localises to the cytoplasm. The protein localises to the nucleus. The protein is Negative cofactor 2 complex subunit beta (ncb2) of Schizosaccharomyces pombe (strain 972 / ATCC 24843) (Fission yeast).